The chain runs to 127 residues: Holo-[acyl-carrier-protein] synthase (127 aa).

The Mg(2+) site is built by Asp8 and Glu57.

It belongs to the P-Pant transferase superfamily. AcpS family. It depends on Mg(2+) as a cofactor.

It localises to the cytoplasm. The enzyme catalyses apo-[ACP] + CoA = holo-[ACP] + adenosine 3',5'-bisphosphate + H(+). Functionally, transfers the 4'-phosphopantetheine moiety from coenzyme A to a Ser of acyl-carrier-protein. This is Holo-[acyl-carrier-protein] synthase from Vesicomyosocius okutanii subsp. Calyptogena okutanii (strain HA).